A 204-amino-acid polypeptide reads, in one-letter code: CASP-like protein 2A1 (204 aa).

A compositionally biased stretch (basic and acidic residues) spans 1-11; the sequence is MEKSNDHDKAS. The interval 1 to 25 is disordered; sequence MEKSNDHDKASHGGSGGGATEKWEE. The Cytoplasmic segment spans residues 1–32; the sequence is MEKSNDHDKASHGGSGGGATEKWEETSPGIRT. The chain crosses the membrane as a helical span at residues 33 to 53; that stretch reads AETMLRLAPVGLCVAALVVML. The Extracellular portion of the chain corresponds to 54 to 74; it reads KDSETNEFGSISYSNLTAFRY. A glycan (N-linked (GlcNAc...) asparagine) is linked at asparagine 68. The chain crosses the membrane as a helical span at residues 75–95; the sequence is LVHANGICAGYSLLSAAIAAM. Topologically, residues 96-113 are cytoplasmic; the sequence is PRSSSTMPRVWTFFCLDQ. The chain crosses the membrane as a helical span at residues 114–134; the sequence is LLTYLVLAAGAVSAEVLYLAY. Topologically, residues 135–155 are extracellular; that stretch reads NGDSAITWSDACSSYGGFCHR. The chain crosses the membrane as a helical span at residues 156–176; sequence ATASVIITFFVVCFYILLSLI. At 177–204 the chain is on the cytoplasmic side; sequence SSYKLFTRFDPPSIVDSDKTLEVAVFGS.

It belongs to the Casparian strip membrane proteins (CASP) family. In terms of assembly, homodimer and heterodimers.

It is found in the cell membrane. The protein is CASP-like protein 2A1 of Arabidopsis lyrata subsp. lyrata (Lyre-leaved rock-cress).